The chain runs to 81 residues: Adenoregulin-related peptide (81 aa).

The first 22 residues, 1–22 (MAFLKKSLLLVLFLGLVSLSIC), serve as a signal peptide directing secretion. The propeptide occupies 23 to 43 (EEEKRENEDEEEQEDDEQSEM). Residues 24–46 (EEKRENEDEEEQEDDEQSEMKRG) are disordered. Positions 30–40 (EDEEEQEDDEQ) are enriched in acidic residues. The residue at position 78 (I78) is an Isoleucine amide. Residues 79 to 81 (GEQ) constitute a propeptide that is removed on maturation.

As to expression, expressed by the skin glands.

The protein localises to the secreted. In terms of biological role, has antibacterial activity against Gram-positive bacterium M.luteus NCT C2665 and against Gram-negative bacterium E.coli K12D31. This Agalychnis callidryas (Red-eyed tree frog) protein is Adenoregulin-related peptide.